We begin with the raw amino-acid sequence, 240 residues long: Putative truncated effector protein hopW1-2 (240 aa).

The segment at 1 to 32 (MSPAQIIRTSHSFPPSFTGTSSSAENSHAQSP) is disordered. The segment covering 9–23 (TSHSFPPSFTGTSSS) has biased composition (low complexity).

This sequence belongs to the HopW family.

The sequence is that of Putative truncated effector protein hopW1-2 (hopW1-2) from Pseudomonas syringae pv. maculicola.